The sequence spans 181 residues: Regulator of G-protein signaling 10 (181 aa).

The interval 1–35 is disordered; the sequence is MFTRAVSRLSRKRPPSDIHDGDGSSSSGHQSLKST. Ser-24 and Ser-41 each carry phosphoserine. The RGS domain maps to 41-156; the sequence is SLENLLEDPE…LKSDLFLKHR (116 aa). Residue Cys-74 is the site of S-palmitoyl cysteine attachment. The interval 157-181 is disordered; that stretch reads RTEEEEEDPPDAQTAAKRASRIYNT. Ser-176 is subject to Phosphoserine.

In terms of assembly, interacts with GNAZ, GNAI1 and GNAI3. Associates specifically with the activated, GTP-bound forms of GNAZ and GNAI3.

It localises to the cytoplasm. The protein localises to the cytosol. Its subcellular location is the nucleus. In terms of biological role, regulates G protein-coupled receptor signaling cascades, including signaling downstream of the muscarinic acetylcholine receptor CHRM2. Inhibits signal transduction by increasing the GTPase activity of G protein alpha subunits, thereby driving them into their inactive GDP-bound form. Modulates the activity of potassium channels that are activated in response to CHRM2 signaling. Activity on GNAZ is inhibited by palmitoylation of the G-protein. The chain is Regulator of G-protein signaling 10 (Rgs10) from Rattus norvegicus (Rat).